A 1409-amino-acid polypeptide reads, in one-letter code: L-2-aminoadipate reductase large subunit (1409 aa).

Residues 858-937 form the Carrier domain; it reads QALSETEQTL…GFASEIDRLL (80 aa). The residue at position 896 (Ser-896) is an O-(pantetheine 4'-phosphoryl)serine.

This sequence belongs to the ATP-dependent AMP-binding enzyme family. Heterodimer of an alpha and a beta subunit. It depends on pantetheine 4'-phosphate as a cofactor.

The enzyme catalyses (S)-2-amino-6-oxohexanoate + NADP(+) + H2O = L-2-aminoadipate + NADPH + 2 H(+). It catalyses the reaction (S)-2-amino-6-oxohexanoate + NAD(+) + H2O = L-2-aminoadipate + NADH + 2 H(+). The catalysed reaction is (S)-2-amino-6-oxohexanoate + AMP + diphosphate + NADP(+) = L-2-aminoadipate + ATP + NADPH + H(+). It participates in amino-acid biosynthesis; L-lysine biosynthesis via AAA pathway; L-lysine from L-alpha-aminoadipate (fungal route): step 1/3. In terms of biological role, catalyzes the activation of alpha-aminoadipate by ATP-dependent adenylation and the reduction of activated alpha-aminoadipate by NADPH. The activated alpha-aminoadipate is bound to the phosphopantheinyl group of the enzyme itself before it is reduced to (S)-2-amino-6-oxohexanoate. The sequence is that of L-2-aminoadipate reductase large subunit (lys2) from Penicillium chrysogenum (Penicillium notatum).